Consider the following 264-residue polypeptide: Major prion protein (264 aa).

The signal sequence occupies residues 1 to 24 (MVKSHIGSWILVLFVAMWSDVGLC). Positions 25–241 (KKRPKPGGGW…ESEAYYQRGA (217 aa)) are interaction with GRB2, ERI3 and SYN1. The interval 28–118 (PKPGGGWNTG…QWNKPSKPKT (91 aa)) is disordered. 6 consecutive repeat copies span residues 54-62 (SQGGGGWGQ), 63-70 (PHGGGWGQ), 71-78 (PHGGGWGQ), 79-86 (PHGGGWGQ), 87-94 (PHGGGWGQ), and 95-103 (PHGGGGWGQ). Positions 54–103 (SQGGGGWGQPHGGGWGQPHGGGWGQPHGGGWGQPHGGGWGQPHGGGGWGQ) are 6 X 8 AA tandem repeats of P-H-G-G-G-W-G-Q. Over residues 55 to 107 (QGGGGWGQPHGGGWGQPHGGGWGQPHGGGWGQPHGGGWGQPHGGGGWGQGGTH) the composition is skewed to gly residues. Residues His-72, Gly-73, Gly-74, His-80, Gly-81, Gly-82, His-88, Gly-89, Gly-90, His-96, Gly-98, and Gly-99 each coordinate Cu(2+). The cysteines at positions 190 and 225 are disulfide-linked. Residues Asn-192 and Asn-208 are each glycosylated (N-linked (GlcNAc...) asparagine). Residue Ala-241 is the site of GPI-anchor amidated alanine attachment. Positions 242–264 (SVILFSSPPVILLISFLIFLIVG) are cleaved as a propeptide — removed in mature form.

Belongs to the prion family. In terms of assembly, monomer and homodimer. Has a tendency to aggregate into amyloid fibrils containing a cross-beta spine, formed by a steric zipper of superposed beta-strands. Soluble oligomers may represent an intermediate stage on the path to fibril formation. Copper binding may promote oligomerization. Interacts with GRB2, APP, ERI3/PRNPIP and SYN1. Mislocalized cytosolically exposed PrP interacts with MGRN1; this interaction alters MGRN1 subcellular location and causes lysosomal enlargement. Interacts with KIAA1191.

Its subcellular location is the cell membrane. It is found in the golgi apparatus. Its function is as follows. Its primary physiological function is unclear. Has cytoprotective activity against internal or environmental stresses. May play a role in neuronal development and synaptic plasticity. May be required for neuronal myelin sheath maintenance. May play a role in iron uptake and iron homeostasis. Soluble oligomers are toxic to cultured neuroblastoma cells and induce apoptosis (in vitro). Association with GPC1 (via its heparan sulfate chains) targets PRNP to lipid rafts. Also provides Cu(2+) or Zn(2+) for the ascorbate-mediated GPC1 deaminase degradation of its heparan sulfate side chains. This chain is Major prion protein (PRNP), found in Tragelaphus imberbis (Lesser kudu).